The chain runs to 428 residues: GTPase Obg (428 aa).

Residues 1–158 enclose the Obg domain; that stretch reads MFVDQVKIYV…RYVTLELKLL (158 aa). The OBG-type G domain maps to 159-329; sequence ADVGLVGFPS…LLFAIADLLE (171 aa). Residues 165 to 172, 190 to 194, 212 to 215, 282 to 285, and 310 to 312 each bind GTP; these read GFPSVGKS, FTTIV, DLPG, NKMD, and SAV. Mg(2+)-binding residues include S172 and T192. Positions 350-428 constitute an OCT domain; sequence KLEKEEAPFH…LLNYEFEFVD (79 aa).

Belongs to the TRAFAC class OBG-HflX-like GTPase superfamily. OBG GTPase family. Monomer. Requires Mg(2+) as cofactor.

The protein localises to the cytoplasm. An essential GTPase which binds GTP, GDP and possibly (p)ppGpp with moderate affinity, with high nucleotide exchange rates and a fairly low GTP hydrolysis rate. Plays a role in control of the cell cycle, stress response, ribosome biogenesis and in those bacteria that undergo differentiation, in morphogenesis control. This is GTPase Obg from Anoxybacillus flavithermus (strain DSM 21510 / WK1).